The following is a 450-amino-acid chain: FAD-linked oxidoreductase penO (450 aa).

In terms of domain architecture, FAD-binding PCMH-type spans 32-203 (PPELPYAIVK…TRFFIRTRPA (172 aa)).

The protein belongs to the oxygen-dependent FAD-linked oxidoreductase family. It depends on FAD as a cofactor.

It participates in secondary metabolite biosynthesis. In terms of biological role, FAD-linked oxidoreductase; part of the gene cluster that mediates the biosynthesis of the indole diterpenes penitrems. The geranylgeranyl diphosphate (GGPP) synthase penG catalyzes the first step in penitrem biosynthesis via conversion of farnesyl pyrophosphate and isopentyl pyrophosphate into geranylgeranyl pyrophosphate (GGPP). Condensation of indole-3-glycerol phosphate with GGPP by the prenyl transferase penC then forms 3-geranylgeranylindole (3-GGI). Epoxidation by the FAD-dependent monooxygenase penM leads to a epoxidized-GGI that is substrate of the terpene cyclase penB for cyclization to yield paspaline. Paspaline is subsequently converted to 13-desoxypaxilline by the cytochrome P450 monooxygenase penP, the latter being then converted to paxilline by the cytochrome P450 monooxygenase penQ. Paxilline is converted to beta-paxitriol via C-10 ketoreduction by the short-chain dehydrogenase PC-15 which can be monoprenylated at the C-20 by the indole diterpene prenyltransferase penD. A two-step elimination (acetylation and elimination) process performed by the O-acetyltransferase PC-16 and the P.simplicissimum ptmI-ortholog not yet identified in P.crustosum, leads to the production of the prenylated form of penijanthine. The FAD-linked oxidoreductase ptmO then converts the prenylated form of penijanthine into PC-M5 which is in turn transformed into PC-M4 by the aromatic dimethylallyltransferase PC-22. A series of oxidation steps involving 4 cytochrome P450 monooxygenases (PC-21, PC-05, PC-23, PC-20) and a FAD-dependent monooxygenase (PC-14) are required for the transformation of PC-M4 to penitrems A and E. Synthesis of these final products is proposed to proceed via penitrems D and C (PC-21, PC-05, PC-14) and penitrems B and F (PC-21, PC-05, PC-14, PC-23). The protein is FAD-linked oxidoreductase penO of Penicillium crustosum (Blue mold fungus).